The following is a 423-amino-acid chain: Adenosylmethionine-8-amino-7-oxononanoate aminotransferase (423 aa).

Residue Trp-51 coordinates substrate. 111 to 112 (GS) contacts pyridoxal 5'-phosphate. Tyr-144 contacts substrate. Residue Asp-243 participates in pyridoxal 5'-phosphate binding. Substrate is bound by residues Lys-272 and Gly-306. Residue Lys-272 is modified to N6-(pyridoxal phosphate)lysine. Position 307 to 308 (307 to 308 (PT)) interacts with pyridoxal 5'-phosphate. Arg-390 lines the substrate pocket.

Belongs to the class-III pyridoxal-phosphate-dependent aminotransferase family. BioA subfamily. As to quaternary structure, homodimer. Pyridoxal 5'-phosphate is required as a cofactor.

It is found in the cytoplasm. It carries out the reaction (8S)-8-amino-7-oxononanoate + S-adenosyl-L-methionine = S-adenosyl-4-methylsulfanyl-2-oxobutanoate + (7R,8S)-7,8-diammoniononanoate. Its pathway is cofactor biosynthesis; biotin biosynthesis; 7,8-diaminononanoate from 8-amino-7-oxononanoate (SAM route): step 1/1. Its function is as follows. Catalyzes the transfer of the alpha-amino group from S-adenosyl-L-methionine (SAM) to 7-keto-8-aminopelargonic acid (KAPA) to form 7,8-diaminopelargonic acid (DAPA). It is the only aminotransferase known to utilize SAM as an amino donor. This chain is Adenosylmethionine-8-amino-7-oxononanoate aminotransferase, found in Corynebacterium glutamicum (strain ATCC 13032 / DSM 20300 / JCM 1318 / BCRC 11384 / CCUG 27702 / LMG 3730 / NBRC 12168 / NCIMB 10025 / NRRL B-2784 / 534).